The following is a 154-amino-acid chain: Protein X (154 aa).

The segment at 68–117 (PCALRFTSARRMETTVNAHQVLPKVLHKRTLGLSAMSTTDLEAYFKDCLF) is mitochondrial targeting sequence.

The protein belongs to the orthohepadnavirus protein X family. In terms of assembly, may form homodimer. May interact with host CEBPA, CFLAR, CREB1, DDB1, E4F1, HBXIP, HSPD1/HSP60, NFKBIA, POLR2E and SMAD4. Interacts with host SMC5-SMC6 complex and induces its degradation. Interacts with host TRPC4AP; leading to prevent ubiquitination of TRPC4AP. Interacts with host PLSCR1; this interaction promotes ubiquitination and degradation of HBx and impairs HBx-mediated cell proliferation. A fraction may be phosphorylated in insect cells and HepG2 cells, a human hepatoblastoma cell line. Phosphorylated in vitro by host protein kinase C or mitogen-activated protein kinase. N-acetylated in insect cells.

It localises to the host cytoplasm. The protein resides in the host nucleus. It is found in the host mitochondrion. In terms of biological role, multifunctional protein that plays a role in silencing host antiviral defenses and promoting viral transcription. Does not seem to be essential for HBV infection. May be directly involved in development of cirrhosis and liver cancer (hepatocellular carcinoma). Most of cytosolic activities involve modulation of cytosolic calcium. The effect on apoptosis is controversial depending on the cell types in which the studies have been conducted. May induce apoptosis by localizing in mitochondria and causing loss of mitochondrial membrane potential. May also modulate apoptosis by binding host CFLAR, a key regulator of the death-inducing signaling complex (DISC). Promotes viral transcription by using the host E3 ubiquitin ligase DDB1 to target the SMC5-SMC6 complex to proteasomal degradation. This host complex would otherwise bind to viral episomal DNA, and prevents its transcription. Moderately stimulates transcription of many different viral and cellular transcription elements. Promoters and enhancers stimulated by HBx contain DNA binding sites for NF-kappa-B, AP-1, AP-2, c-EBP, ATF/CREB, or the calcium-activated factor NF-AT. This Hepatitis B virus genotype C subtype adr (isolate Japan/Nishioka/1983) (HBV-C) protein is Protein X.